The following is a 296-amino-acid chain: Sulfotransferase 1C2 (296 aa).

49-54 provides a ligand contact to 3'-phosphoadenylyl sulfate; sequence KSGTTW. 107–109 serves as a coordination point for substrate; that stretch reads RTH. The Proton acceptor role is filled by His-109. Residues Arg-131, Ser-139, Tyr-194, and 228 to 233 each bind 3'-phosphoadenylyl sulfate; that span reads TSFEKM. Ser-139 is modified (phosphoserine). Ser-254 bears the Phosphoserine mark. 256–260 is a 3'-phosphoadenylyl sulfate binding site; sequence FMRKG.

Belongs to the sulfotransferase 1 family. As to expression, found in gastrointestinal tract tissues, liver and kidney.

It is found in the cytoplasm. It localises to the lysosome. The protein localises to the mitochondrion. The enzyme catalyses a phenol + 3'-phosphoadenylyl sulfate = an aryl sulfate + adenosine 3',5'-bisphosphate + H(+). It carries out the reaction cholesterol + 3'-phosphoadenylyl sulfate = cholesterol sulfate + adenosine 3',5'-bisphosphate + H(+). Sulfotransferase that utilizes 3'-phospho-5'-adenylyl sulfate (PAPS) to catalyze the sulfate conjugation of phenolic compounds. Does not transfer sulfate to steroids, dopamine, acetaminophen, or alpha-naphthol. Except in mitochondria, where it can add sulfate to cholesterol producing cholesterol sulfate, which alters mitochondrial membrane organization, and impacts protein complex mobility increasing state-III respiration, thereby modulating mitochondrial respiration. Catalyzes the sulfation of the carcinogenic N-hydroxy-2-acetylaminofluorene leading to highly reactive intermediates capable of forming DNA adducts, potentially resulting in mutagenesis. This chain is Sulfotransferase 1C2 (SULT1C2), found in Oryctolagus cuniculus (Rabbit).